The chain runs to 378 residues: Transcription elongation factor TFIIS (378 aa).

Met-1 carries the post-translational modification N-acetylmethionine. One can recognise a TFIIS N-terminal domain in the interval 10-89 (EGAKKAADAA…EIWKKVVIEE (80 aa)). The TFIIS central domain occupies 210–333 (VRDKIRELLV…DCERGLAAKA (124 aa)). The segment at 336-376 (DQFKCGRCGQRKCTYYQMQTRSADEPMTTYVTCVNCDNHWK) adopts a TFIIS-type zinc-finger fold. Residues Cys-340, Cys-343, Cys-368, and Cys-371 each contribute to the Zn(2+) site.

Expressed in roots, leaves and flowers.

The protein resides in the nucleus. In terms of biological role, necessary for efficient RNA polymerase II transcription elongation past template-encoded arresting sites. Involved in the control of seed dormancy and germination. This chain is Transcription elongation factor TFIIS, found in Arabidopsis thaliana (Mouse-ear cress).